Consider the following 453-residue polypeptide: Serine/threonine-protein phosphatase 2A regulatory subunit B'' subunit gamma (453 aa).

The segment at 1 to 27 (MDWKDVLRRRLASPNSDPKRKKSEQEL) is disordered. EF-hand domains follow at residues 273-308 (PSAL…TMTN) and 341-376 (KEPA…IQEL). Positions 286, 288, 290, 292, and 297 each coordinate Ca(2+).

In terms of assembly, interacts with MCM3AP/GANP, PPP5C, and the phosphatase 2A core enzyme composed of the PPP2CA catalytic subunit and the constant regulatory subunit PPP2R1A. Finds in a complex with ABCB1, TFPI2 and PPP2R3C; leading to the dephosphorylation of ABCB1.

It localises to the nucleus. Its subcellular location is the cytoplasm. Functionally, may regulate MCM3AP phosphorylation through phosphatase recruitment. May act as a negative regulator of ABCB1 expression and function through the dephosphorylation of ABCB1 by TFPI2/PPP2R3C complex. May play a role in the activation-induced cell death of B-cells. The sequence is that of Serine/threonine-protein phosphatase 2A regulatory subunit B'' subunit gamma (Ppp2r3c) from Rattus norvegicus (Rat).